We begin with the raw amino-acid sequence, 372 residues long: MAKKRVVIGMSGGVDSSVSAWLLKEQGYEVIGLFMKNWEDDDDSEYCSTRQDWIDAASVADVVGVDIEAVNFAAEYKDRVFAEFLREYEAGRTPNPDVLCNAEIKFKAFLDHAMLLGADMIATGHYARVREVTSGPDAGQVQLLKAVDASKDQSYFLHRLNQAQLSKTLFPLGEIRKTEVRKIAEQLQLPNASKKDSTGICFIGERPFREFLNRYLSYQPGPMKTPDGTIVGEHVGLSFYTLGQRKGIGLGGMKTHKNTDGNSGPWYVARKDVANNTLYIVQGHDHPWLLSSALSAGQMSWVAGRAPSEELVAAKTRYRQADVACSQHATADNLALAFDTPQWAVTPGQSAVLYQGDVCLGGGIITASTLTE.

ATP is bound by residues 9–16 (GMSGGVDS) and Met-35. Positions 95–97 (NPD) are interaction with target base in tRNA. Cys-100 acts as the Nucleophile in catalysis. Cys-100 and Cys-201 form a disulfide bridge. Gly-124 contributes to the ATP binding site. The interaction with tRNA stretch occupies residues 151 to 153 (KDQ). Catalysis depends on Cys-201, which acts as the Cysteine persulfide intermediate. Residues 317–318 (RY) form an interaction with tRNA region.

This sequence belongs to the MnmA/TRMU family.

The protein localises to the cytoplasm. It carries out the reaction S-sulfanyl-L-cysteinyl-[protein] + uridine(34) in tRNA + AH2 + ATP = 2-thiouridine(34) in tRNA + L-cysteinyl-[protein] + A + AMP + diphosphate + H(+). Catalyzes the 2-thiolation of uridine at the wobble position (U34) of tRNA, leading to the formation of s(2)U34. The chain is tRNA-specific 2-thiouridylase MnmA from Herminiimonas arsenicoxydans.